We begin with the raw amino-acid sequence, 105 residues long: Dynein axonemal light chain 4 (105 aa).

Belongs to the dynein light chain family. In terms of assembly, consists of at least two heavy chains and a number of intermediate and light chains.

The protein localises to the cytoplasm. It is found in the cytoskeleton. The protein resides in the cilium axoneme. Its function is as follows. Force generating protein of respiratory cilia. Produces force towards the minus ends of microtubules. Dynein has ATPase activity. This is Dynein axonemal light chain 4 (DNAL4) from Bos taurus (Bovine).